A 225-amino-acid chain; its full sequence is ATP-dependent dethiobiotin synthetase BioD (225 aa).

12 to 17 contacts ATP; the sequence is EVGKTY. Thr-16 lines the Mg(2+) pocket. Residue Lys-37 is part of the active site. Ser-41 is a substrate binding site. Residues Asp-52, 114–117, and 174–175 contribute to the ATP site; these read EGAG and NC. Mg(2+) is bound by residues Asp-52 and Glu-114.

Belongs to the dethiobiotin synthetase family. As to quaternary structure, homodimer. Mg(2+) serves as cofactor.

The protein resides in the cytoplasm. It catalyses the reaction (7R,8S)-7,8-diammoniononanoate + CO2 + ATP = (4R,5S)-dethiobiotin + ADP + phosphate + 3 H(+). Its pathway is cofactor biosynthesis; biotin biosynthesis; biotin from 7,8-diaminononanoate: step 1/2. Its function is as follows. Catalyzes a mechanistically unusual reaction, the ATP-dependent insertion of CO2 between the N7 and N8 nitrogen atoms of 7,8-diaminopelargonic acid (DAPA, also called 7,8-diammoniononanoate) to form a ureido ring. This Francisella tularensis subsp. mediasiatica (strain FSC147) protein is ATP-dependent dethiobiotin synthetase BioD.